We begin with the raw amino-acid sequence, 349 residues long: UDP-3-O-acylglucosamine N-acyltransferase (349 aa).

Catalysis depends on H248, which acts as the Proton acceptor.

Belongs to the transferase hexapeptide repeat family. LpxD subfamily. In terms of assembly, homotrimer.

The enzyme catalyses a UDP-3-O-[(3R)-3-hydroxyacyl]-alpha-D-glucosamine + a (3R)-hydroxyacyl-[ACP] = a UDP-2-N,3-O-bis[(3R)-3-hydroxyacyl]-alpha-D-glucosamine + holo-[ACP] + H(+). The protein operates within bacterial outer membrane biogenesis; LPS lipid A biosynthesis. Its function is as follows. Catalyzes the N-acylation of UDP-3-O-acylglucosamine using 3-hydroxyacyl-ACP as the acyl donor. Is involved in the biosynthesis of lipid A, a phosphorylated glycolipid that anchors the lipopolysaccharide to the outer membrane of the cell. The chain is UDP-3-O-acylglucosamine N-acyltransferase from Gloeothece citriformis (strain PCC 7424) (Cyanothece sp. (strain PCC 7424)).